Here is a 509-residue protein sequence, read N- to C-terminus: MFS transporter fsdG (509 aa).

N-linked (GlcNAc...) asparagine glycans are attached at residues N8 and N26. The next 4 helical transmembrane spans lie at F63–M83, I103–P123, I139–A159, and F162–F182. N189 carries an N-linked (GlcNAc...) asparagine glycan. Transmembrane regions (helical) follow at residues L195 to A215, W222 to L242, L298 to I318, and G341 to I361. Residue N367 is glycosylated (N-linked (GlcNAc...) asparagine). The next 4 membrane-spanning stretches (helical) occupy residues Y380–W400, W408–P428, A442–L462, and G474–F494.

The protein belongs to the major facilitator superfamily.

The protein localises to the cell membrane. Functionally, efflux pump that might be required for efficient secretion of fusaridione A or other secondary metabolies produced by the fusaridione A gene cluster. The sequence is that of MFS transporter fsdG from Fusarium heterosporum.